A 512-amino-acid chain; its full sequence is Phosphoenolpyruvate carboxylase (512 aa).

The protein belongs to the PEPCase type 2 family. Homotetramer. Requires Mg(2+) as cofactor.

The enzyme catalyses oxaloacetate + phosphate = phosphoenolpyruvate + hydrogencarbonate. Its function is as follows. Catalyzes the irreversible beta-carboxylation of phosphoenolpyruvate (PEP) to form oxaloacetate (OAA), a four-carbon dicarboxylic acid source for the tricarboxylic acid cycle. This chain is Phosphoenolpyruvate carboxylase, found in Caldivirga maquilingensis (strain ATCC 700844 / DSM 13496 / JCM 10307 / IC-167).